Consider the following 34-residue polypeptide: U4-theraphotoxin-Hs1a (34 aa).

3 disulfides stabilise this stretch: Cys3–Cys17, Cys10–Cys22, and Cys16–Cys33.

It belongs to the neurotoxin 14 (magi-1) family. 05 (ICK-7) subfamily. In terms of tissue distribution, expressed by the venom gland.

The protein resides in the secreted. Its function is as follows. Intracisternal injection paralyzes mice. The protein is U4-theraphotoxin-Hs1a of Cyriopagopus schmidti (Chinese bird spider).